The chain runs to 283 residues: Bifunctional protein FolD (283 aa).

NADP(+) contacts are provided by residues 163-165, serine 188, and isoleucine 229; that span reads GRS.

It belongs to the tetrahydrofolate dehydrogenase/cyclohydrolase family. Homodimer.

The enzyme catalyses (6R)-5,10-methylene-5,6,7,8-tetrahydrofolate + NADP(+) = (6R)-5,10-methenyltetrahydrofolate + NADPH. It catalyses the reaction (6R)-5,10-methenyltetrahydrofolate + H2O = (6R)-10-formyltetrahydrofolate + H(+). The protein operates within one-carbon metabolism; tetrahydrofolate interconversion. Its function is as follows. Catalyzes the oxidation of 5,10-methylenetetrahydrofolate to 5,10-methenyltetrahydrofolate and then the hydrolysis of 5,10-methenyltetrahydrofolate to 10-formyltetrahydrofolate. The protein is Bifunctional protein FolD of Latilactobacillus sakei subsp. sakei (strain 23K) (Lactobacillus sakei subsp. sakei).